The sequence spans 348 residues: UDP-rhamnose/UDP-galactose transporter 2 (348 aa).

Helical transmembrane passes span 12-32 (AVSD…IIMA), 44-64 (FSFA…VGMV), 81-101 (LLWF…SLML), 104-124 (VGFY…MEWV), 133-153 (EVKA…VTDV), 160-180 (FICA…IGSL), 196-216 (APIQ…FLSG), 230-250 (LCIL…YLCI), 257-277 (SFQV…WLIF), and 286-306 (IAGM…VELE).

This sequence belongs to the TPT transporter family. TPT (TC 2.A.7.9) subfamily.

The protein localises to the golgi apparatus membrane. Its function is as follows. Nucleotide-sugar transporter that transports UDP-rhamnose or UDP-galactose and UMP in a strict counter-exchange mode. In Arabidopsis thaliana (Mouse-ear cress), this protein is UDP-rhamnose/UDP-galactose transporter 2.